A 56-amino-acid chain; its full sequence is UPF0434 protein WIGBR2520 (56 aa).

It belongs to the UPF0434 family.

This Wigglesworthia glossinidia brevipalpis protein is UPF0434 protein WIGBR2520.